A 715-amino-acid polypeptide reads, in one-letter code: 1,4-alpha-glucan branching enzyme GlgB (715 aa).

D396 (nucleophile) is an active-site residue. E449 functions as the Proton donor in the catalytic mechanism.

Belongs to the glycosyl hydrolase 13 family. GlgB subfamily. As to quaternary structure, monomer.

It carries out the reaction Transfers a segment of a (1-&gt;4)-alpha-D-glucan chain to a primary hydroxy group in a similar glucan chain.. Its pathway is glycan biosynthesis; glycogen biosynthesis. Its function is as follows. Catalyzes the formation of the alpha-1,6-glucosidic linkages in glycogen by scission of a 1,4-alpha-linked oligosaccharide from growing alpha-1,4-glucan chains and the subsequent attachment of the oligosaccharide to the alpha-1,6 position. The polypeptide is 1,4-alpha-glucan branching enzyme GlgB (Vibrio vulnificus (strain YJ016)).